The primary structure comprises 219 residues: Vesicle-associated membrane protein 711 (219 aa).

Ala2 carries the N-acetylalanine modification. At 2–189 the chain is on the cytoplasmic side; it reads AILYALVARG…RSNVWWRNCK (188 aa). A Longin domain is found at 7–111; that stretch reads LVARGTVVLS…AMNEEFSRVL (105 aa). A v-SNARE coiled-coil homology domain is found at 126–186; it reads RINRIKGEMN…RRFRSNVWWR (61 aa). A helical; Anchor for type IV membrane protein membrane pass occupies residues 190-210; sequence LTVLLILLLLVIIYIAVAFLC. Over 211-219 the chain is Vesicular; the sequence is HGPTLPSCI.

The protein belongs to the synaptobrevin family. Expressed in flowers, leaves, stems and roots.

It localises to the vacuole membrane. It is found in the prevacuolar compartment membrane. Its function is as follows. Involved in the targeting and/or fusion of transport vesicles to their target membrane. The sequence is that of Vesicle-associated membrane protein 711 from Arabidopsis thaliana (Mouse-ear cress).